The sequence spans 233 residues: Aspartate/glutamate leucyltransferase (233 aa).

It belongs to the R-transferase family. Bpt subfamily.

It is found in the cytoplasm. The catalysed reaction is N-terminal L-glutamyl-[protein] + L-leucyl-tRNA(Leu) = N-terminal L-leucyl-L-glutamyl-[protein] + tRNA(Leu) + H(+). It catalyses the reaction N-terminal L-aspartyl-[protein] + L-leucyl-tRNA(Leu) = N-terminal L-leucyl-L-aspartyl-[protein] + tRNA(Leu) + H(+). In terms of biological role, functions in the N-end rule pathway of protein degradation where it conjugates Leu from its aminoacyl-tRNA to the N-termini of proteins containing an N-terminal aspartate or glutamate. The chain is Aspartate/glutamate leucyltransferase from Vibrio parahaemolyticus serotype O3:K6 (strain RIMD 2210633).